Here is a 704-residue protein sequence, read N- to C-terminus: MTVDHDFNSEDILFPIESMSSIQYVENNNPNNINNDVIPYSLDIKNTVLDSADLNDIQNQETSLNLGLPPLSFDSPLPVTETIPSTTDNSLHLKADSNKNRDARTIENDSEIKSTNNASGSGANQYTTLTSPYPMNDILYNMNNPLQSPSPSSVPQNPTINPPINTASNETNLSPQTSNGNETLISPRAQQHTSIKDNRLSLPNGANSNLFIDTNPNNLNEKLRNQLNSDTNSYSNSISNSNSNSTGNLNSSYFNSLNIDSMLDDYVSSDLLLNDDDDDTNLSRRRFSDVITNQFPSMTNSRNSISHSLDLWNHPKINPSNRNTNLNITTNSTSSSNASPNTTTMNANADSNIAGNPKNNDATIDNELTQILNEYNMNFNDNLGTSTSGKNKSACPSSFDANAMTKINPSQQLQQQLNRVQHKQLTSSHNNSSTNMKSFNSDLYSRRQRASLPIIDDSLSYDLVNKQDEDPKNDMLPNSNLSSSQQFIKPSMILSDNASVIAKVATTGLSNDMPFLTEEGEQNANSTPNFDLSITQMNMAPLSPASSSSTSLATNHFYHHFPQQGHHTMNSKIGSSLRRRKSAVPLMGTVPLTNQQNNISSSSVNSTGNGAGVTKERRPSYRRKSMTPSRRSSVVIESTKELEEKPFHCHICPKSFKRSEHLKRHVRSVHSNERPFACHICDKKFSRSDNLSQHIKTHKKHGDI.

A disordered region spans residues 84–246 (PSTTDNSLHL…SISNSNSNST (163 aa)). Positions 91-112 (LHLKADSNKNRDARTIENDSEI) are enriched in basic and acidic residues. Positions 113–133 (KSTNNASGSGANQYTTLTSPY) are enriched in polar residues. The segment covering 141–166 (NMNNPLQSPSPSSVPQNPTINPPINT) has biased composition (low complexity). 2 stretches are compositionally biased toward polar residues: residues 167–193 (ASNE…QQHT) and 204–220 (NGAN…NNLN). A compositionally biased stretch (low complexity) spans 228-246 (NSDTNSYSNSISNSNSNST). Positions 261 to 269 (SMLDDYVSS) match the 9aaTAD motif. Phosphoserine occurs at positions 288 and 304. The tract at residues 418 to 437 (NRVQHKQLTSSHNNSSTNMK) is disordered. Residues 426–437 (TSSHNNSSTNMK) are compositionally biased toward polar residues. Residues serine 451 and serine 582 each carry the phosphoserine modification. Positions 592–634 (LTNQQNNISSSSVNSTGNGAGVTKERRPSYRRKSMTPSRRSSV) are disordered. Over residues 593-608 (TNQQNNISSSSVNSTG) the composition is skewed to low complexity. Position 633 is a phosphoserine (serine 633). 2 C2H2-type zinc fingers span residues 647-665 (FHCH…LKRH) and 676-698 (FACH…IKTH).

As to quaternary structure, interacts with WHI2.

The protein resides in the cytoplasm. It is found in the nucleus. Its function is as follows. Positive transcriptional factor that acts as a component of the stress responsive system. Recognizes and binds to the stress response element (STRE) which is involved in the response to various forms of stress (heat, oxidative, osmotic, etc.). Involved in the regulation of the CTT1, DDR2, HSP12 genes. May be regulated via WHI2-PSR1 complex phosphatase activity. This is Zinc finger protein MSN2 (MSN2) from Saccharomyces cerevisiae (strain ATCC 204508 / S288c) (Baker's yeast).